Consider the following 449-residue polypeptide: Phosphomethylpyrimidine synthase (449 aa).

Substrate-binding positions include Asn-80, Met-109, Tyr-138, His-173, 193–195 (SRG), 234–237 (DSLR), and Glu-273. Zn(2+) is bound at residue His-277. Position 300 (Tyr-300) interacts with substrate. Zn(2+) is bound at residue His-341. [4Fe-4S] cluster contacts are provided by Cys-421, Cys-424, and Cys-429.

The protein belongs to the ThiC family. As to quaternary structure, homodimer. [4Fe-4S] cluster is required as a cofactor.

It carries out the reaction 5-amino-1-(5-phospho-beta-D-ribosyl)imidazole + S-adenosyl-L-methionine = 4-amino-2-methyl-5-(phosphooxymethyl)pyrimidine + CO + 5'-deoxyadenosine + formate + L-methionine + 3 H(+). The protein operates within cofactor biosynthesis; thiamine diphosphate biosynthesis. In terms of biological role, catalyzes the synthesis of the hydroxymethylpyrimidine phosphate (HMP-P) moiety of thiamine from aminoimidazole ribotide (AIR) in a radical S-adenosyl-L-methionine (SAM)-dependent reaction. The protein is Phosphomethylpyrimidine synthase of Campylobacter hominis (strain ATCC BAA-381 / DSM 21671 / CCUG 45161 / LMG 19568 / NCTC 13146 / CH001A).